The primary structure comprises 785 residues: Cadherin-7 (785 aa).

An N-terminal signal peptide occupies residues M1 to A27. A propeptide spanning residues E28–R47 is cleaved from the precursor. Topologically, residues E28–T607 are extracellular. Cadherin domains follow at residues W49–F153, L154–F262, P263–F377, S378–F482, and F482–Y599. 2 N-linked (GlcNAc...) asparagine glycosylation sites follow: N449 and N530. The chain crosses the membrane as a helical span at residues G608–V628. Over T629–S785 the chain is Cytoplasmic.

It localises to the cell membrane. Cadherins are calcium-dependent cell adhesion proteins. They preferentially interact with themselves in a homophilic manner in connecting cells; cadherins may thus contribute to the sorting of heterogeneous cell types. The protein is Cadherin-7 (CDH7) of Homo sapiens (Human).